Reading from the N-terminus, the 235-residue chain is Large ribosomal subunit protein uL1 (235 aa).

It belongs to the universal ribosomal protein uL1 family. In terms of assembly, part of the 50S ribosomal subunit.

Its function is as follows. Binds directly to 23S rRNA. The L1 stalk is quite mobile in the ribosome, and is involved in E site tRNA release. In terms of biological role, protein L1 is also a translational repressor protein, it controls the translation of the L11 operon by binding to its mRNA. This Thermobifida fusca (strain YX) protein is Large ribosomal subunit protein uL1.